Reading from the N-terminus, the 475-residue chain is Ribulose bisphosphate carboxylase large chain (475 aa).

The propeptide occupies 1–2 (MS). Position 3 is an N-acetylproline (Pro-3). At Lys-14 the chain carries N6,N6,N6-trimethyllysine. Substrate-binding residues include Asn-123 and Thr-173. Lys-175 (proton acceptor) is an active-site residue. Substrate is bound at residue Lys-177. Residues Lys-201, Asp-203, and Glu-204 each contribute to the Mg(2+) site. Lys-201 is subject to N6-carboxylysine. Residue His-294 is the Proton acceptor of the active site. The substrate site is built by Arg-295, His-327, and Ser-379.

It belongs to the RuBisCO large chain family. Type I subfamily. Heterohexadecamer of 8 large chains and 8 small chains; disulfide-linked. The disulfide link is formed within the large subunit homodimers. The cofactor is Mg(2+). Post-translationally, the disulfide bond which can form in the large chain dimeric partners within the hexadecamer appears to be associated with oxidative stress and protein turnover.

Its subcellular location is the plastid. The protein localises to the chloroplast. The enzyme catalyses 2 (2R)-3-phosphoglycerate + 2 H(+) = D-ribulose 1,5-bisphosphate + CO2 + H2O. It catalyses the reaction D-ribulose 1,5-bisphosphate + O2 = 2-phosphoglycolate + (2R)-3-phosphoglycerate + 2 H(+). Its function is as follows. RuBisCO catalyzes two reactions: the carboxylation of D-ribulose 1,5-bisphosphate, the primary event in carbon dioxide fixation, as well as the oxidative fragmentation of the pentose substrate in the photorespiration process. Both reactions occur simultaneously and in competition at the same active site. This chain is Ribulose bisphosphate carboxylase large chain, found in Betula papyrifera (Paper birch).